The following is a 104-amino-acid chain: Large ribosomal subunit protein bL21 (104 aa).

Belongs to the bacterial ribosomal protein bL21 family. In terms of assembly, part of the 50S ribosomal subunit. Contacts protein L20.

In terms of biological role, this protein binds to 23S rRNA in the presence of protein L20. The polypeptide is Large ribosomal subunit protein bL21 (Pseudomonas putida (strain GB-1)).